A 106-amino-acid polypeptide reads, in one-letter code: Urease subunit beta (106 aa).

It belongs to the urease beta subunit family. As to quaternary structure, heterotrimer of UreA (gamma), UreB (beta) and UreC (alpha) subunits. Three heterotrimers associate to form the active enzyme.

It is found in the cytoplasm. It carries out the reaction urea + 2 H2O + H(+) = hydrogencarbonate + 2 NH4(+). It participates in nitrogen metabolism; urea degradation; CO(2) and NH(3) from urea (urease route): step 1/1. The polypeptide is Urease subunit beta (Synechococcus sp. (strain CC9902)).